Reading from the N-terminus, the 882-residue chain is MNAPAKFSTSQIRSDFLAFFEGKGHTIVPSAPLVPGNDPTLLFTNSGMVQFKDVFLGAEKRSYVRAADVQRCLRAGGKHNDLDSVGYTARHHTFFEMLGNWSFGDYFKKDAIAWAWELLTQVWKLPADRLLVTVYHTDEEAFALWRDMIGIPESRIVRIGDNKGAPYASDNFWQMADTGPCGPCTEIFFDHGDHIAGGPPGSPDEDGDRFIEIWNLVFMQFDRQPDGTLVPLPAPCVDTGMGLERLAAILQHVHTNYEIDLFQALIGKASALTGITDLENKSLRVIADHIRACSFLIVDGVLPSNEGRGYVLRRIIRRALRHGWMLGVRQPFFSKMVPTLVELMGEAYPELVVAQDTVARALLAEEERFAETLDAGMKIFDEVASRSQDIIPGADAFRLYDTYGFPVDLTADIARERGMRVDMEGFEFAMERQRETARAAGKFGGGVALPADLVASMSPTVFLGYEAYDADALKVVALLKQGRPVERAEAGDEVIVFTDRTPFYAESGGQVGDSGQLSGPGVSINVTDTQKFAGQFHGHVGRISEGALALGDVLAGGIDTQRRGKTILNHSATHLLHAALREVLGTHVQQKGSLVAPDRLRFDFSHFQPFTADELAVIERKVNAEVRANHGVEVHNMAMQEALDFGAMALFGEKYGENVRVLKMGGYSTELCGGTHVTRTGDIGLFKITSEGGVSSGVRRIEAVTGQGALDYVADEERRLLEAANLLGGNTSEVVDKVRALTERQKRLERELESLKAKLASGATADLGASAIDVVGVKVVAVRLEGFDAKALRDAMDRLKQQLGDSVIVLAGASGGKVALVAGVNGSPTGKVKAGELLGHIASQIGGKGGGRPDLAQGGGEDGPALATALDGVPLWVKQHLG.

Zn(2+) is bound by residues histidine 570, histidine 574, cysteine 672, and histidine 676.

Belongs to the class-II aminoacyl-tRNA synthetase family. Requires Zn(2+) as cofactor.

The protein localises to the cytoplasm. The enzyme catalyses tRNA(Ala) + L-alanine + ATP = L-alanyl-tRNA(Ala) + AMP + diphosphate. Catalyzes the attachment of alanine to tRNA(Ala) in a two-step reaction: alanine is first activated by ATP to form Ala-AMP and then transferred to the acceptor end of tRNA(Ala). Also edits incorrectly charged Ser-tRNA(Ala) and Gly-tRNA(Ala) via its editing domain. The chain is Alanine--tRNA ligase from Xanthomonas euvesicatoria pv. vesicatoria (strain 85-10) (Xanthomonas campestris pv. vesicatoria).